The chain runs to 239 residues: Ribosomal RNA small subunit methyltransferase G (239 aa).

S-adenosyl-L-methionine contacts are provided by residues Gly-77, Phe-82, 128-129 (AE), and Arg-146. The interval 215–239 (DKKRQTPKKYPRKPGTPNKTPLLEK) is disordered.

It belongs to the methyltransferase superfamily. RNA methyltransferase RsmG family.

The protein localises to the cytoplasm. In terms of biological role, specifically methylates the N7 position of guanine in position 535 of 16S rRNA. This is Ribosomal RNA small subunit methyltransferase G from Staphylococcus aureus (strain USA300).